Here is a 203-residue protein sequence, read N- to C-terminus: FMN-dependent NADH:quinone oxidoreductase (203 aa).

FMN-binding positions include S9, 15 to 17 (SVS), and 138 to 141 (SRGG).

This sequence belongs to the azoreductase type 1 family. In terms of assembly, homodimer. Requires FMN as cofactor.

The catalysed reaction is 2 a quinone + NADH + H(+) = 2 a 1,4-benzosemiquinone + NAD(+). The enzyme catalyses N,N-dimethyl-1,4-phenylenediamine + anthranilate + 2 NAD(+) = 2-(4-dimethylaminophenyl)diazenylbenzoate + 2 NADH + 2 H(+). Functionally, quinone reductase that provides resistance to thiol-specific stress caused by electrophilic quinones. Also exhibits azoreductase activity. Catalyzes the reductive cleavage of the azo bond in aromatic azo compounds to the corresponding amines. This chain is FMN-dependent NADH:quinone oxidoreductase, found in Methylorubrum extorquens (strain PA1) (Methylobacterium extorquens).